We begin with the raw amino-acid sequence, 25 residues long: Fibrinolytic enzyme large subunit (25 aa).

Positions 1 to 25 (VIGGTNASPGEIPWQLSQQRQSGSW) constitute a Peptidase S1 domain. The interval 1–25 (VIGGTNASPGEIPWQLSQQRQSGSW) is disordered. A compositionally biased stretch (polar residues) spans 15-25 (QLSQQRQSGSW).

It belongs to the peptidase S1 family. As to quaternary structure, heterodimer of a large and a small subunit held together by hydrophobic interactions.

Functionally, cleaves the carboxyl side of basic amino acids, small neutral amino acids, and Met residue. It is also a plasminogen activator. This Eisenia fetida (Red wiggler worm) protein is Fibrinolytic enzyme large subunit.